Consider the following 430-residue polypeptide: Asparagine--tRNA ligase (430 aa).

It belongs to the class-II aminoacyl-tRNA synthetase family. In terms of assembly, homodimer.

It is found in the cytoplasm. It catalyses the reaction tRNA(Asn) + L-asparagine + ATP = L-asparaginyl-tRNA(Asn) + AMP + diphosphate + H(+). The sequence is that of Asparagine--tRNA ligase from Oceanobacillus iheyensis (strain DSM 14371 / CIP 107618 / JCM 11309 / KCTC 3954 / HTE831).